The sequence spans 317 residues: Ribonuclease Z (317 aa).

7 residues coordinate Zn(2+): His61, His63, Asp65, His66, His153, Asp221, and His280. The active-site Proton acceptor is the Asp65.

This sequence belongs to the RNase Z family. As to quaternary structure, homodimer. It depends on Zn(2+) as a cofactor.

The enzyme catalyses Endonucleolytic cleavage of RNA, removing extra 3' nucleotides from tRNA precursor, generating 3' termini of tRNAs. A 3'-hydroxy group is left at the tRNA terminus and a 5'-phosphoryl group is left at the trailer molecule.. Zinc phosphodiesterase, which displays some tRNA 3'-processing endonuclease activity. Probably involved in tRNA maturation, by removing a 3'-trailer from precursor tRNA. This Alkaliphilus oremlandii (strain OhILAs) (Clostridium oremlandii (strain OhILAs)) protein is Ribonuclease Z.